The primary structure comprises 199 residues: Glycerol-3-phosphate acyltransferase (199 aa).

A run of 5 helical transmembrane segments spans residues 5-25, 56-76, 83-103, 118-138, and 141-161; these read VLTI…SAVL, SAAL…YLAF, IALG…IFFG, APIG…LVLV, and YSSF…WWLD.

This sequence belongs to the PlsY family. Probably interacts with PlsX.

The protein resides in the cell inner membrane. It catalyses the reaction an acyl phosphate + sn-glycerol 3-phosphate = a 1-acyl-sn-glycero-3-phosphate + phosphate. Its pathway is lipid metabolism; phospholipid metabolism. Catalyzes the transfer of an acyl group from acyl-phosphate (acyl-PO(4)) to glycerol-3-phosphate (G3P) to form lysophosphatidic acid (LPA). This enzyme utilizes acyl-phosphate as fatty acyl donor, but not acyl-CoA or acyl-ACP. The polypeptide is Glycerol-3-phosphate acyltransferase (Shewanella halifaxensis (strain HAW-EB4)).